We begin with the raw amino-acid sequence, 704 residues long: Pentatricopeptide repeat-containing protein At1g56690, mitochondrial (704 aa).

A mitochondrion-targeting transit peptide spans 1–12 (MKRLKLILRRTY). PPR repeat units lie at residues 16–46 (TGVN…LQFK), 47–81 (AIGS…NVVS), 82–108 (WNGL…MPER), 109–143 (NVVS…NEVS), 144–170 (WTVM…MPVK), 171–205 (DVVA…NVVT), 206–232 (WTTM…MPEK), 233–267 (TEVS…PVIA), 268–294 (CNAM…MEDR), 295–329 (DNAT…GVRP), 330–364 (SFPS…QFDD), 365–395 (DVYV…FSSK), 396–430 (DIIM…GTMP), 431–465 (NKVT…FCVT), and 467–497 (TVEH…MTIK). Residues 502–577 (VWGALLGACK…FPGCSWIEVG (76 aa)) form a type E motif region. The segment at 578-609 (KKVHMFTRGGIKNHPEQAMILMMLEKTDGLLR) is type E(+) motif. The interval 610–704 (EAGYSPDCSH…NGECSCRDYW (95 aa)) is type DYW motif.

The protein belongs to the PPR family. PCMP-H subfamily.

The protein localises to the mitochondrion. The chain is Pentatricopeptide repeat-containing protein At1g56690, mitochondrial (PCMP-H69) from Arabidopsis thaliana (Mouse-ear cress).